The sequence spans 392 residues: Chorismate synthase (392 aa).

Positions 39 and 45 each coordinate NADP(+). Residues 131–133 (RSS), 255–256 (NA), glycine 300, 315–319 (KPIPT), and arginine 341 each bind FMN.

This sequence belongs to the chorismate synthase family. Homotetramer. FMNH2 is required as a cofactor.

It catalyses the reaction 5-O-(1-carboxyvinyl)-3-phosphoshikimate = chorismate + phosphate. The protein operates within metabolic intermediate biosynthesis; chorismate biosynthesis; chorismate from D-erythrose 4-phosphate and phosphoenolpyruvate: step 7/7. Functionally, catalyzes the anti-1,4-elimination of the C-3 phosphate and the C-6 proR hydrogen from 5-enolpyruvylshikimate-3-phosphate (EPSP) to yield chorismate, which is the branch point compound that serves as the starting substrate for the three terminal pathways of aromatic amino acid biosynthesis. This reaction introduces a second double bond into the aromatic ring system. In Leuconostoc citreum (strain KM20), this protein is Chorismate synthase.